The primary structure comprises 443 residues: Xaa-Pro dipeptidase (443 aa).

The Mn(2+) site is built by Asp-246, Asp-257, His-339, Glu-384, and Glu-423.

It belongs to the peptidase M24B family. Bacterial-type prolidase subfamily. The cofactor is Mn(2+).

It catalyses the reaction Xaa-L-Pro dipeptide + H2O = an L-alpha-amino acid + L-proline. In terms of biological role, splits dipeptides with a prolyl residue in the C-terminal position. This is Xaa-Pro dipeptidase from Klebsiella pneumoniae subsp. pneumoniae (strain ATCC 700721 / MGH 78578).